We begin with the raw amino-acid sequence, 57 residues long: Phylloseptin-Az4 (57 aa).

The first 13 residues, 1–13 (LVLFLGLVSLSIC), serve as a signal peptide directing secretion. The propeptide occupies 14 to 35 (EEEKRETEEEENDQEEDDKSEE). The tract at residues 16–35 (EKRETEEEENDQEEDDKSEE) is disordered. A compositionally biased stretch (acidic residues) spans 21–32 (EEEENDQEEDDK). Leucine 56 carries the leucine amide modification.

Expressed by the skin glands.

It is found in the secreted. Its function is as follows. Has antibacterial activity against the Gram-positive bacterium M.luteus ATCC 49732 (MIC=1.3 uM). Does not inhibit the growth of the fungus C.albicans. The sequence is that of Phylloseptin-Az4 (psn12) from Pithecopus azureus (Orange-legged monkey tree frog).